The following is a 218-amino-acid chain: Small ribosomal subunit protein uS3c (218 aa).

Positions V47–S118 constitute a KH type-2 domain.

Belongs to the universal ribosomal protein uS3 family. Part of the 30S ribosomal subunit.

The protein localises to the plastid. The protein resides in the chloroplast. The sequence is that of Small ribosomal subunit protein uS3c (rps3) from Lepidium virginicum (Virginia pepperweed).